The primary structure comprises 880 residues: GRB2-associated and regulator of MAPK protein 2 (880 aa).

A CABIT region spans residues R12–R320. Disordered stretches follow at residues P385–S407, I461–V483, S527–S548, S569–P611, and A633–Q713. 2 stretches are compositionally biased toward low complexity: residues P640–G663 and Q683–S696. S740 is modified (phosphoserine). Residues S813–R877 enclose the SAM domain.

The protein belongs to the GAREM family.

In terms of biological role, probable adapter protein that provides a critical link between cell surface epidermal growth factor receptor and the MAPK/ERK signaling pathway. The polypeptide is GRB2-associated and regulator of MAPK protein 2 (Garem2) (Mus musculus (Mouse)).